The primary structure comprises 251 residues: 3-deoxy-manno-octulosonate cytidylyltransferase (251 aa).

This sequence belongs to the KdsB family.

The protein resides in the cytoplasm. The catalysed reaction is 3-deoxy-alpha-D-manno-oct-2-ulosonate + CTP = CMP-3-deoxy-beta-D-manno-octulosonate + diphosphate. Its pathway is nucleotide-sugar biosynthesis; CMP-3-deoxy-D-manno-octulosonate biosynthesis; CMP-3-deoxy-D-manno-octulosonate from 3-deoxy-D-manno-octulosonate and CTP: step 1/1. The protein operates within bacterial outer membrane biogenesis; lipopolysaccharide biosynthesis. Functionally, activates KDO (a required 8-carbon sugar) for incorporation into bacterial lipopolysaccharide in Gram-negative bacteria. This is 3-deoxy-manno-octulosonate cytidylyltransferase from Vibrio parahaemolyticus serotype O3:K6 (strain RIMD 2210633).